The chain runs to 30 residues: Cyclotide mden-E (30 aa).

The segment at residues 1–30 (GIPCGESCVYIPCITAAIGCSCKSKVCYRN) is a cross-link (cyclopeptide (Gly-Asn)). Disulfide bonds link Cys-4/Cys-20, Cys-8/Cys-22, and Cys-13/Cys-27.

Belongs to the cyclotide family. Bracelet subfamily. Post-translationally, this is a cyclic peptide.

In terms of biological role, probably participates in a plant defense mechanism. This chain is Cyclotide mden-E, found in Melicytus dentatus (Tree violet).